Here is a 339-residue protein sequence, read N- to C-terminus: Deubiquitinase and deneddylase Dub2 (339 aa).

The chain crosses the membrane as a helical span at residues Ile-36–Phe-56. Residues His-203, Asp-220, and Cys-282 contribute to the active site.

This sequence belongs to the peptidase C48 family.

The protein resides in the secreted. It is found in the host cell. It localises to the membrane. Its function is as follows. Effector proteins function to alter host cell physiology and promote bacterial survival in host tissues. This protease possesses deubiquitinating and deneddylating activities. The protein is Deubiquitinase and deneddylase Dub2 (cdu2) of Chlamydia trachomatis serovar A (strain ATCC VR-571B / DSM 19440 / HAR-13).